Reading from the N-terminus, the 257-residue chain is UPF0246 protein Sbal195_1149 (257 aa).

The protein belongs to the UPF0246 family.

The chain is UPF0246 protein Sbal195_1149 from Shewanella baltica (strain OS195).